A 304-amino-acid polypeptide reads, in one-letter code: GDP-6-deoxy-D-mannose reductase (304 aa).

NADP(+) contacts are provided by residues 13-14 (FV) and 39-40 (DL). 105–106 (SG) provides a ligand contact to substrate. Residue Y131 coordinates NADP(+). Substrate contacts are provided by residues N160, R200, and 260–263 (RRAE).

The protein belongs to the NAD(P)-dependent epimerase/dehydratase family. GDP-6-deoxy-D-mannose reductase subfamily.

The enzyme catalyses GDP-alpha-D-rhamnose + NAD(+) = GDP-4-dehydro-alpha-D-rhamnose + NADH + H(+). It catalyses the reaction GDP-alpha-D-rhamnose + NADP(+) = GDP-4-dehydro-alpha-D-rhamnose + NADPH + H(+). Reductase that catalyzes the conversion of GDP-6-deoxy-D-mannose to GDP-4-dehydro-6-deoxy-D-mannose (GDP-D-rhamnose). The polypeptide is GDP-6-deoxy-D-mannose reductase (rmd) (Pseudomonas aeruginosa (strain ATCC 15692 / DSM 22644 / CIP 104116 / JCM 14847 / LMG 12228 / 1C / PRS 101 / PAO1)).